Reading from the N-terminus, the 84-residue chain is MAGERAQNLQDTFLNHVRKNKIPLTIFLVNGVKLQGVVTWFDNFCVLLRRDGHSQLVYKHAISTIMPGHPVQLFEQGEEGAEKG.

Positions 11-71 (DTFLNHVRKN…ISTIMPGHPV (61 aa)) constitute a Sm domain.

Belongs to the Hfq family. Homohexamer.

RNA chaperone that binds small regulatory RNA (sRNAs) and mRNAs to facilitate mRNA translational regulation in response to envelope stress, environmental stress and changes in metabolite concentrations. Also binds with high specificity to tRNAs. The chain is RNA-binding protein Hfq from Methylobacterium nodulans (strain LMG 21967 / CNCM I-2342 / ORS 2060).